The following is a 139-amino-acid chain: Cytochrome c-551 (139 aa).

Positions 1–20 (MTRTLAVVLAMTFSAAPVFA) are cleaved as a signal peptide. Heme c-binding residues include Cys-34, Cys-37, His-38, and Met-116.

It belongs to the cytochrome c family. In terms of processing, binds 1 heme c group covalently per subunit.

The polypeptide is Cytochrome c-551 (Roseobacter denitrificans (strain ATCC 33942 / OCh 114) (Erythrobacter sp. (strain OCh 114))).